A 158-amino-acid chain; its full sequence is 6,7-dimethyl-8-ribityllumazine synthase (158 aa).

Residues Phe-22, 57-59 (AVE), and 81-83 (AVI) contribute to the 5-amino-6-(D-ribitylamino)uracil site. Position 86–87 (86–87 (GT)) interacts with (2S)-2-hydroxy-3-oxobutyl phosphate. Catalysis depends on His-89, which acts as the Proton donor. Phe-114 is a binding site for 5-amino-6-(D-ribitylamino)uracil. Arg-128 lines the (2S)-2-hydroxy-3-oxobutyl phosphate pocket.

This sequence belongs to the DMRL synthase family. Forms an icosahedral capsid composed of 60 subunits, arranged as a dodecamer of pentamers.

The enzyme catalyses (2S)-2-hydroxy-3-oxobutyl phosphate + 5-amino-6-(D-ribitylamino)uracil = 6,7-dimethyl-8-(1-D-ribityl)lumazine + phosphate + 2 H2O + H(+). It participates in cofactor biosynthesis; riboflavin biosynthesis; riboflavin from 2-hydroxy-3-oxobutyl phosphate and 5-amino-6-(D-ribitylamino)uracil: step 1/2. Its function is as follows. Catalyzes the formation of 6,7-dimethyl-8-ribityllumazine by condensation of 5-amino-6-(D-ribitylamino)uracil with 3,4-dihydroxy-2-butanone 4-phosphate. This is the penultimate step in the biosynthesis of riboflavin. The polypeptide is 6,7-dimethyl-8-ribityllumazine synthase (Shewanella halifaxensis (strain HAW-EB4)).